A 306-amino-acid polypeptide reads, in one-letter code: MLNYVIKRLLGLIPTLFIVSVLVFLFVHMLPGDPARLIAGPEADAQVIELVRQQLGLDQPLYHQFWHYISNAVQGDFGLSMVSRRPVADEIASRFMPTLWLTITSMVWAVIFGMAAGIIAAVWRNRWPDRLSMTIAVSGISFPAFALGMLLIQVFSVELGWLPTVGADSWQHYILPSLTLGAAVAAVMARFTRASFVDVLSEDYMRTARAKGVSETWVVLKHGLRNAMIPVVTMMGLQFGFLLGGSIVVEKVFNWPGLGRLLVDSVEMRDYPVIQAEILLFSLEFILINLVVDVLYAAINPAIRYK.

Residues 1-8 (MLNYVIKR) are Cytoplasmic-facing. Residues 9–29 (LLGLIPTLFIVSVLVFLFVHM) traverse the membrane as a helical segment. Topologically, residues 30–102 (LPGDPARLIA…SRFMPTLWLT (73 aa)) are periplasmic. The 198-residue stretch at 95–292 (FMPTLWLTIT…LEFILINLVV (198 aa)) folds into the ABC transmembrane type-1 domain. The chain crosses the membrane as a helical span at residues 103–123 (ITSMVWAVIFGMAAGIIAAVW). The Cytoplasmic portion of the chain corresponds to 124–134 (RNRWPDRLSMT). Residues 135–155 (IAVSGISFPAFALGMLLIQVF) form a helical membrane-spanning segment. Topologically, residues 156 to 168 (SVELGWLPTVGAD) are periplasmic. A helical membrane pass occupies residues 169 to 189 (SWQHYILPSLTLGAAVAAVMA). The Cytoplasmic segment spans residues 190 to 228 (RFTRASFVDVLSEDYMRTARAKGVSETWVVLKHGLRNAM). A helical membrane pass occupies residues 229-249 (IPVVTMMGLQFGFLLGGSIVV). The Periplasmic portion of the chain corresponds to 250–277 (EKVFNWPGLGRLLVDSVEMRDYPVIQAE). The chain crosses the membrane as a helical span at residues 278–298 (ILLFSLEFILINLVVDVLYAA). Over 299–306 (INPAIRYK) the chain is Cytoplasmic.

This sequence belongs to the binding-protein-dependent transport system permease family. The complex is composed of two ATP-binding proteins (GsiA), two transmembrane proteins (GsiC and GsiD) and a solute-binding protein (GsiB).

It is found in the cell inner membrane. Functionally, part of the ABC transporter complex GsiABCD involved in glutathione import. Probably responsible for the translocation of the substrate across the membrane. The protein is Glutathione transport system permease protein GsiC of Escherichia coli O1:K1 / APEC.